The sequence spans 21 residues: Kassinatuerin-1 (21 aa).

The residue at position 21 (Ile-21) is an Isoleucine amide.

In terms of tissue distribution, expressed by the skin dorsal glands.

Its subcellular location is the secreted. In terms of biological role, shows broad-spectrum antimicrobial activity against the Gram-negative bacterium E.coli (MIC=6.25 uM), K.pneumoniae (MIC=25 uM), E.cloacae (MIC=6.25 uM), P.aeruginosa (MIC=25 uM), the Gram-positive bacterium S.aureus (MIC=6.25 uM), S.epidermidis (MIC=6.25 uM), E.faecalis (MIC=12.5 uM), and the fungus C.albicans (MIC=100 uM). Has no antimicrobial effect against P.mirabilis (MIC&gt;100 uM). Has relatively high cytolytic and hemolytic activities. Its alpha-helix has considerable amphipathic character. The sequence is that of Kassinatuerin-1 from Kassina senegalensis (Senegal running frog).